Reading from the N-terminus, the 331-residue chain is Tagatose 1,6-diphosphate aldolase 2 (331 aa).

Belongs to the aldolase LacD family.

It catalyses the reaction D-tagatofuranose 1,6-bisphosphate = D-glyceraldehyde 3-phosphate + dihydroxyacetone phosphate. Its pathway is carbohydrate metabolism; D-tagatose 6-phosphate degradation; D-glyceraldehyde 3-phosphate and glycerone phosphate from D-tagatose 6-phosphate: step 2/2. The polypeptide is Tagatose 1,6-diphosphate aldolase 2 (lacD2) (Enterococcus faecalis (strain ATCC 700802 / V583)).